The following is an 87-amino-acid chain: Putative regulatory protein BCG9842_B1272 (87 aa).

The protein belongs to the RemA family.

This Bacillus cereus (strain G9842) protein is Putative regulatory protein BCG9842_B1272.